Consider the following 678-residue polypeptide: uncharacterized protein (678 aa).

Transmembrane regions (helical) follow at residues 14–34 (LMFA…WTGL) and 180–200 (GAVI…IGGF).

Belongs to the mycobacterial PPE family.

Its subcellular location is the cell membrane. This is an uncharacterized protein from Mycobacterium tuberculosis (strain ATCC 25618 / H37Rv).